The chain runs to 357 residues: Alanine racemase (357 aa).

The Proton acceptor; specific for D-alanine role is filled by lysine 35. Lysine 35 is subject to N6-(pyridoxal phosphate)lysine. Arginine 131 provides a ligand contact to substrate. Tyrosine 256 (proton acceptor; specific for L-alanine) is an active-site residue. Methionine 304 contacts substrate.

It belongs to the alanine racemase family. Pyridoxal 5'-phosphate serves as cofactor.

It catalyses the reaction L-alanine = D-alanine. It participates in amino-acid biosynthesis; D-alanine biosynthesis; D-alanine from L-alanine: step 1/1. Functionally, catalyzes the interconversion of L-alanine and D-alanine. May also act on other amino acids. The chain is Alanine racemase (alr) from Legionella pneumophila (strain Lens).